A 334-amino-acid chain; its full sequence is tRNA dimethylallyltransferase (334 aa).

22–29 (GPTASGKT) serves as a coordination point for ATP. 24–29 (TASGKT) is a binding site for substrate.

The protein belongs to the IPP transferase family. Monomer. The cofactor is Mg(2+).

It catalyses the reaction adenosine(37) in tRNA + dimethylallyl diphosphate = N(6)-dimethylallyladenosine(37) in tRNA + diphosphate. Functionally, catalyzes the transfer of a dimethylallyl group onto the adenine at position 37 in tRNAs that read codons beginning with uridine, leading to the formation of N6-(dimethylallyl)adenosine (i(6)A). The protein is tRNA dimethylallyltransferase of Rhodopirellula baltica (strain DSM 10527 / NCIMB 13988 / SH1).